The following is a 151-amino-acid chain: Large ribosomal subunit protein bL9 (151 aa).

It belongs to the bacterial ribosomal protein bL9 family.

Functionally, binds to the 23S rRNA. The protein is Large ribosomal subunit protein bL9 of Chloroherpeton thalassium (strain ATCC 35110 / GB-78).